A 460-amino-acid chain; its full sequence is UDP-N-acetylmuramate--L-alanine ligase (460 aa).

116–122 serves as a coordination point for ATP; that stretch reads GSHGKTT.

Belongs to the MurCDEF family.

It is found in the cytoplasm. It carries out the reaction UDP-N-acetyl-alpha-D-muramate + L-alanine + ATP = UDP-N-acetyl-alpha-D-muramoyl-L-alanine + ADP + phosphate + H(+). Its pathway is cell wall biogenesis; peptidoglycan biosynthesis. Functionally, cell wall formation. This chain is UDP-N-acetylmuramate--L-alanine ligase, found in Caldanaerobacter subterraneus subsp. tengcongensis (strain DSM 15242 / JCM 11007 / NBRC 100824 / MB4) (Thermoanaerobacter tengcongensis).